Consider the following 1078-residue polypeptide: MPRRKQQAPRRSAAYVPEEELKAADIEEDNLEDDGLSLDVQDSEYLYNDEHEIKETPSYQNSPISSATNQDAGYGSPFSETSDHLADFKSTSSKEGQDKEDGQNTENVSYPTDSLAQIKAVYTNLLSECCWSNLALDLKKSNENSSPTTNTNKSSMSEATGSTSDPDTPTTIPSSSCTNTSTSISVTTSNSTNSNSASGYDWHQAALAKTLQQTSYGLLPEPSLFSTVQLYRQSNKIYGSVFTGASRFKCKDCSAAYDTLVELTVHMNETGHYRDDNKDRDAERTKRWSKPRKRSLMEMEGKEDAQKVLKCMYCGHSFESLQDLSVHMIKTKHYQKVPLKEPVPAITKLIPSTKKRALQDIALPDSPEQAGISPGASVSESAKDPKAANPYVTPNNRYGYQNGASYTWQFEARKAQILKCMECGSSHDSLQQLTAHMMVTGHFLKVTNSASKKGKQLVMDAVIEEKIQSIPLPPTTHARLPGSYIKKQPDSPTGSTHSEEKKDPEKEKVNNCEVEKRIKEENEDPEKIEPATLYQYLREEDLDTSPKGGLDILKSLENTVSSAISKAQNGAPSWGGYPSIHAAYQLPGTVKALQPSVQSVQIQPSYAISVKTMTPDHNSLIHSPGSLTPPTHRSNVSAMEELVEKVTGKINIKKEEKVLEKEMVIPAKPPSPVAKENKEILKAEEANGKVLKKSNEADIQKPKKETPIEPHALNGTEPLKAKVTNGCSSLGIITDHSPEPSFINPLSALQSIMNTHLGKVSKPVSPSLDPLAMLYKISNSMLDKPIYPTTPVKQVESIERYYYEDSDQPIDLTKSKNKPFVTSITDHVSSPLRESALMDISDMVKNLTGRLTPKSSTPSTVSEKSDADGSSFEEAMDELSPVHKRKGRQSNWNPQHLLILQAQFASSLRETAEGKYIMSDLGPQERVNISKFTGLSMTTISHWLANVKYQLRRTGGTKFLKNLDTGHPVFFCNDCASQFRTASTYIGHLETHLGFSLKDLSKHSLNRIQEQQNVTKVITNKALSSVGGLIEEDSSSTFQCKLCNRTFASKHAVKLHLSKTHGKSPEDHVIYVTELRKQ.

Disordered regions lie at residues 1–110 (MPRR…NVSY), 140–197 (KSNE…SNSA), and 271–300 (GHYR…MEME). Over residues 26–36 (IEEDNLEDDGL) the composition is skewed to acidic residues. Residues 57-71 (PSYQNSPISSATNQD) show a composition bias toward polar residues. Over residues 143–197 (ENSSPTTNTNKSSMSEATGSTSDPDTPTTIPSSSCTNTSTSISVTTSNSTNSNSA) the composition is skewed to low complexity. 2 consecutive C2H2-type zinc fingers follow at residues 248–272 (FKCK…ETGH) and 309–333 (LKCM…KTKH). Basic and acidic residues predominate over residues 271-286 (GHYRDDNKDRDAERTK). Residues 365–394 (DSPEQAGISPGASVSESAKDPKAANPYVTP) form a disordered region. The C2H2-type 3 zinc-finger motif lies at 418-442 (LKCMECGSSHDSLQQLTAHMMVTGH). 2 disordered regions span residues 472-524 (LPPT…ENED) and 850-877 (RLTP…EAMD). The span at 497–524 (HSEEKKDPEKEKVNNCEVEKRIKEENED) shows a compositional bias: basic and acidic residues. Over residues 853-862 (PKSSTPSTVS) the composition is skewed to polar residues. The segment at residues 885 to 955 (RKGRQSNWNP…NVKYQLRRTG (71 aa)) is a DNA-binding region (homeobox). C2H2-type zinc fingers lie at residues 970–992 (FFCN…LETH) and 1038–1061 (FQCK…SKTH).

Belongs to the teashirt C2H2-type zinc-finger protein family.

The protein resides in the nucleus. Its function is as follows. Probable transcriptional regulator involved in developmental processes. May act as a transcriptional repressor (Potential). Involved in two major neuronal regionalization processes: primary anteroposterior (AP) axis patterning of the CNS and segmentation of the cranial neuronal crest (CNS) development. The sequence is that of Teashirt homolog 1-A (tshz1-a) from Xenopus laevis (African clawed frog).